We begin with the raw amino-acid sequence, 728 residues long: tRNA (guanine(27)-N(2))-dimethyltransferase (728 aa).

Over residues 1–10 (MENMAEEELL) the composition is skewed to acidic residues. Disordered stretches follow at residues 1–78 (MENM…SKRH) and 98–118 (DVDSASSLNSDNPGTENSQTC). A Phosphothreonine modification is found at Thr-23. Positions 23-33 (TPAPDSAPVPA) are enriched in pro residues. Low complexity predominate over residues 34-46 (PAADTALDSAPTP). Residues 47 to 61 (DSDPAPALAPAPAPA) show a composition bias toward pro residues. Ser-63 bears the Phosphoserine mark. The span at 101–118 (SASSLNSDNPGTENSQTC) shows a compositional bias: polar residues. The short motif at 132-136 (HKLRR) is the Nucleolar localization signal element. The segment at 181-203 (YHCIICSATITRRTDMLGHVKRH) adopts a C2H2-type zinc-finger fold. Residues 224–683 (EILKETDTDI…APLMQFKSIL (460 aa)) form the Trm1 methyltransferase domain. Positions 257, 304, 352, and 353 each coordinate S-adenosyl-L-methionine. The Zn(2+) site is built by Cys-483, Cys-486, Cys-508, and Cys-510. A Glycyl lysine isopeptide (Lys-Gly) (interchain with G-Cter in SUMO2) cross-link involves residue Lys-580. Ser-607 is modified (phosphoserine). Positions 693-728 (GAQSEGQMPPAAEDTVTDRVEMSVSDKAEASGCRRW) are disordered. Positions 708 to 721 (VTDRVEMSVSDKAE) are enriched in basic and acidic residues.

Belongs to the class I-like SAM-binding methyltransferase superfamily. Trm1 family. As to expression, expressed in various neuronal structures during embryonic development, including spinal ganglia, trigeminal nerve and ganglion, olfactory and nasopharyngeal epithelium, nuclei of the metencephalon, thalamus and medulla oblongata. Also expressed in lung, esophagus, epiglottis, ependyma, vertebral column, spinal cord and brown adipose tissue. Expression persists in the adult brain with dynamically changing patterns in cortex and cerebellum.

The protein resides in the nucleus. It localises to the nucleolus. The enzyme catalyses guanosine(27) in tRNA(Tyr) + 2 S-adenosyl-L-methionine = N(2)-dimethylguanosine(27) in tRNA(Tyr) + 2 S-adenosyl-L-homocysteine + 2 H(+). Its function is as follows. Specifically dimethylates a single guanine residue at position 27 of tRNA(Tyr) using S-adenosyl-L-methionine as donor of the methyl groups. Dimethylation at position 27 of tRNA(Tyr) is required for efficient translation of tyrosine codons. Also required to maintain 3-(3-amino-3-carboxypropyl)uridine (acp3U) in the D-loop of several cytoplasmic tRNAs. May play a role in motor coordination and exploratory behavior. This is tRNA (guanine(27)-N(2))-dimethyltransferase from Mus musculus (Mouse).